The primary structure comprises 249 residues: DNA polymerase sliding clamp (249 aa).

The protein belongs to the PCNA family. As to quaternary structure, homotrimer which circularizes head-to-tail (head is a N-terminus, tail is at C-terminus) to form a toroid. RFC opens the toroid so it can load on DNA. Interacts with both Pol I (pol) and Pol II (polB-polC), with Hel308 (hjm) and with Hjc. Interaction with the C-terminal PIP-box of RfcL may stabilize the toroidal structure.

Its function is as follows. Sliding clamp subunit that acts as a moving platform for DNA processing. Responsible for tethering the catalytic subunit of DNA polymerase to DNA during high-speed replication. Unlike its eukaryotic paralog, loads on circular DNA without the replication factor C (RFC) clamp loader, although RFC greatly increases loading efficiency. Stimulates the ATPase activity of replication factor C (RFC) in the presence of ssDNA. Stimulates the helicase activity of Hel308 and may alter its substrate specificity. This is DNA polymerase sliding clamp from Pyrococcus furiosus (strain ATCC 43587 / DSM 3638 / JCM 8422 / Vc1).